The primary structure comprises 386 residues: MATTKSFLILFFMILATTSSTCAKLEEMVTVLSIDGGGIKGIIPAIILEFLEGQLQEVDNNKDARLADYFDVIGGTSTGGLLTAMITTPNENNRPFAAAKDIVPFYFEHGPHIFNYSGSIFGPRYDGKYLLQVLQEKLGETRVHQALTEVAISSFDIKTNKPVIFTKSNLAKSPELDAKMYDICYSTAAAPIYFPPHHFVTHTSNGATYEFNLVDGGVATVGDPALLSLSVATRLAQEDPAFSSIKSLDYKQMLLLSLGTGTNSEFDKTYTAEEAAKWGPLRWMLAIQQMTNAASSYMTDYYISTVFQARHSQNNYLRVQENALNGTTTEMDDASEANMELLVQVGETLLKKPVSKDSPETYEEALKRFAKLLSDRKKLRANKASY.

Positions M1–A23 are cleaved as a signal peptide. Residues L32–L229 form the PNPLA domain. A GXGXXG motif is present at residues G36–G41. The short motif at G75–G79 is the GXSXG element. The active-site Nucleophile is the S77. The N-linked (GlcNAc...) asparagine glycan is linked to N115. The active-site Proton acceptor is D215. The short motif at D215–G217 is the DGA/G element. A coiled-coil region spans residues E321–A384. N325 carries an N-linked (GlcNAc...) asparagine glycan.

This sequence belongs to the patatin family. Tuber.

Its subcellular location is the vacuole. Probable lipolytic acyl hydrolase (LAH), an activity which is thought to be involved in the response of tubers to pathogens. The sequence is that of Patatin-04/09 from Solanum tuberosum (Potato).